A 953-amino-acid chain; its full sequence is MAETLPGSGDSGPGTASLGPGVAETGTRRLSELRVIDLRAELKKRNLDTGGNKSVLMERLKKAVKEEGQDPDEIGIELEATSKKSAKRCVKGLKMEEEGTEDNGLEDDSRDGQEDMEASLENLQNMGMMDMSVLDETEVANSSAPDFGEDGTDGLLDSFCDSKEYVAAQLRQLPAQPPEHAVDGEGFKNTLETSSLNFKVTPDIEESLLEPENEKILDILGETCKSEPVKEESSELEQPFAQDTSSVGPDRKLAEEEDLFDSAHPEEGDLDLASESTAHAQSSKADSLLAVVKREPAEQPGDGERTDCEPVGLEPAVEQSSAASELAEASSEELAEAPTEAPSPEARDSKEDGRKFDFDACNEVPPAPKESSTSEGADQKMSSFKEEKDIKPIIKDEKGRVGSGSGRNLWVSGLSSTTRATDLKNLFSKYGKVVGAKVVTNARSPGARCYGFVTMSTSDEATKCISHLHRTELHGRMISVEKAKNEPAGKKLSDRKECEVKKEKLSSVDRHHSVEIKIEKTVIKKEEKIEKKEEKKPEDIKKEEKDQDELKPGPTNRSRVTKSGSRGMERTVVMDKSKGEPVISVKTTSRSKERSSKSQDRKSESKEKRDILSFDKIKEQRERERQRQREREIRETERRREREQREREQRLEAFHERKEKARLQRERLQLECQRQRLERERMERERLERERMRVERERRKEQERIHREREELRRQQEQLRYEQERRPGRRPYDLDRRDDAYWPEGKRVAMEDRYRADFPRPDHRFHDFDHRDRGQYQDHAIDRREGSRPMMGDHRDGQHYGDDRHGHGGPPERHGRDSRDGWGGYGSDKRLSEGRGLPPPPRGGRDWGEHNQRLEEHQARAWQGAMDAGAASREHARWQGGERGLSGPSGPGHMASRGGVAGRGGFAQGGHSQGHVVPGGGLEGGGVASQDRGSRVPHPHPHPPPYPHFTRRY.

A disordered region spans residues 1–29; sequence MAETLPGSGDSGPGTASLGPGVAETGTRR. Ala-2 carries the N-acetylalanine modification. An SAP domain is found at 30–64; that stretch reads LSELRVIDLRAELKKRNLDTGGNKSVLMERLKKAV. Ser-54 carries the phosphoserine modification. A Glycyl lysine isopeptide (Lys-Gly) (interchain with G-Cter in SUMO1); alternate cross-link involves residue Lys-65. Residue Lys-65 forms a Glycyl lysine isopeptide (Lys-Gly) (interchain with G-Cter in SUMO2); alternate linkage. Positions 91 to 114 are disordered; that stretch reads KGLKMEEEGTEDNGLEDDSRDGQE. Lys-94 participates in a covalent cross-link: Glycyl lysine isopeptide (Lys-Gly) (interchain with G-Cter in SUMO2). Residues 98–114 are compositionally biased toward acidic residues; that stretch reads EGTEDNGLEDDSRDGQE. Residues Ser-109 and Ser-158 each carry the phosphoserine modification. Residues Lys-188 and Lys-199 each participate in a glycyl lysine isopeptide (Lys-Gly) (interchain with G-Cter in SUMO2) cross-link. A Phosphothreonine modification is found at Thr-201. Ser-207 is modified (phosphoserine). The segment at 219–404 is disordered; it reads ILGETCKSEP…KDEKGRVGSG (186 aa). Over residues 224-233 the composition is skewed to basic and acidic residues; that stretch reads CKSEPVKEES. A Glycyl lysine isopeptide (Lys-Gly) (interchain with G-Cter in SUMO) cross-link involves residue Lys-230. Residues 274–285 are compositionally biased toward polar residues; it reads SESTAHAQSSKA. Positions 292–308 are enriched in basic and acidic residues; the sequence is VKREPAEQPGDGERTDC. Residue Lys-293 forms a Glycyl lysine isopeptide (Lys-Gly) (interchain with G-Cter in SUMO) linkage. Over residues 318-329 the composition is skewed to low complexity; it reads EQSSAASELAEA. Basic and acidic residues predominate over residues 345–358; sequence EARDSKEDGRKFDF. A compositionally biased stretch (polar residues) spans 370 to 382; sequence ESSTSEGADQKMS. Glycyl lysine isopeptide (Lys-Gly) (interchain with G-Cter in SUMO2) cross-links involve residues Lys-380, Lys-385, Lys-388, Lys-391, and Lys-395. Residues 383–400 are compositionally biased toward basic and acidic residues; it reads SFKEEKDIKPIIKDEKGR. In terms of domain architecture, RRM spans 407-485; the sequence is RNLWVSGLSS…RMISVEKAKN (79 aa). Phosphoserine is present on residues Ser-507 and Ser-513. Residues Lys-517, Lys-524, Lys-525, Lys-541, Lys-542, and Lys-551 each participate in a glycyl lysine isopeptide (Lys-Gly) (interchain with G-Cter in SUMO2) cross-link. A compositionally biased stretch (basic and acidic residues) spans 525–551; the sequence is KEEKIEKKEEKKPEDIKKEEKDQDELK. Disordered regions lie at residues 525–665 and 684–953; these read KEEK…RLQR and RERL…TRRY. Residues 555–564 show a composition bias toward polar residues; that stretch reads TNRSRVTKSG. Basic and acidic residues predominate over residues 567-579; that stretch reads GMERTVVMDKSKG. Glycyl lysine isopeptide (Lys-Gly) (interchain with G-Cter in SUMO2) cross-links involve residues Lys-578, Lys-586, and Lys-608. Basic and acidic residues-rich tracts occupy residues 590–665 and 684–820; these read RSKE…RLQR and RERL…DSRD. Residues 600–953 are interaction with SAFB1; that stretch reads DRKSESKEKR…PPYPHFTRRY (354 aa). Lys-616 is covalently cross-linked (Glycyl lysine isopeptide (Lys-Gly) (interchain with G-Cter in SUMO2); alternate). Lys-616 is subject to N6-acetyllysine; alternate. The short motif at 713–730 is the Nuclear localization signal element; that stretch reads RRQQEQLRYEQERRPGRR. Residues Ser-787 and Ser-832 each carry the phosphoserine modification. Residues 843–859 are compositionally biased toward basic and acidic residues; that stretch reads GGRDWGEHNQRLEEHQA. The span at 881 to 890 shows a compositional bias: gly residues; the sequence is GERGLSGPSG. Ser-886 is modified (phosphoserine). An omega-N-methylarginine mark is found at Arg-897 and Arg-903. The segment covering 899–927 has biased composition (gly residues); the sequence is GVAGRGGFAQGGHSQGHVVPGGGLEGGGV.

As to quaternary structure, interacts with SAFB/SAFB1 and SCAM1. Interacts with isoform 2 SRPK1 and inhibits its activity. As to expression, expressed at high levels in the CNS and at low levels in the liver. Expressed in a wide number of breast cancer cell lines.

It is found in the cytoplasm. The protein localises to the nucleus. Functionally, binds to scaffold/matrix attachment region (S/MAR) DNA. Can function as an estrogen receptor corepressor and can also inhibit cell proliferation. The chain is Scaffold attachment factor B2 (SAFB2) from Homo sapiens (Human).